The following is a 368-amino-acid chain: Phosphoserine aminotransferase (368 aa).

Residue Arg44 participates in L-glutamate binding. Pyridoxal 5'-phosphate is bound by residues 78 to 79 (AT), Trp104, Thr157, Asp179, and Gln202. At Lys203 the chain carries N6-(pyridoxal phosphate)lysine. 244–245 (NT) is a binding site for pyridoxal 5'-phosphate.

It belongs to the class-V pyridoxal-phosphate-dependent aminotransferase family. SerC subfamily. As to quaternary structure, homodimer. Pyridoxal 5'-phosphate serves as cofactor.

It is found in the cytoplasm. The catalysed reaction is O-phospho-L-serine + 2-oxoglutarate = 3-phosphooxypyruvate + L-glutamate. It catalyses the reaction 4-(phosphooxy)-L-threonine + 2-oxoglutarate = (R)-3-hydroxy-2-oxo-4-phosphooxybutanoate + L-glutamate. The protein operates within amino-acid biosynthesis; L-serine biosynthesis; L-serine from 3-phospho-D-glycerate: step 2/3. It functions in the pathway cofactor biosynthesis; pyridoxine 5'-phosphate biosynthesis; pyridoxine 5'-phosphate from D-erythrose 4-phosphate: step 3/5. Its function is as follows. Catalyzes the reversible conversion of 3-phosphohydroxypyruvate to phosphoserine and of 3-hydroxy-2-oxo-4-phosphonooxybutanoate to phosphohydroxythreonine. The chain is Phosphoserine aminotransferase from Neisseria meningitidis serogroup C / serotype 2a (strain ATCC 700532 / DSM 15464 / FAM18).